A 91-amino-acid chain; its full sequence is Small ribosomal subunit protein bS18 (91 aa).

This sequence belongs to the bacterial ribosomal protein bS18 family. In terms of assembly, part of the 30S ribosomal subunit. Forms a tight heterodimer with protein bS6.

In terms of biological role, binds as a heterodimer with protein bS6 to the central domain of the 16S rRNA, where it helps stabilize the platform of the 30S subunit. The chain is Small ribosomal subunit protein bS18 from Gluconacetobacter diazotrophicus (strain ATCC 49037 / DSM 5601 / CCUG 37298 / CIP 103539 / LMG 7603 / PAl5).